The primary structure comprises 247 residues: Probable transcriptional regulatory protein YebC (247 aa).

Residues 1-20 (MAGHSKWANTRHRKAAQDAK) form a disordered region.

This sequence belongs to the TACO1 family.

The protein localises to the cytoplasm. The protein is Probable transcriptional regulatory protein YebC of Salmonella arizonae (strain ATCC BAA-731 / CDC346-86 / RSK2980).